Reading from the N-terminus, the 472-residue chain is Deoxyribodipyrimidine photo-lyase (472 aa).

Positions 2-134 constitute a Photolyase/cryptochrome alpha/beta domain; sequence TTHLVWFRQD…VCEGFDDSVI (133 aa). (6R)-5,10-methylene-5,6,7,8-tetrahydrofolate-binding residues include Asn-109 and Glu-110. An FAD-binding site is contributed by Tyr-223. Arg-227 is a binding site for DNA. FAD-binding positions include 235–239, Trp-272, and 275–282; these read TSRLS and ELIWREFY. Interaction with DNA regions lie at residues 275–282 and 342–343; these read ELIWREFY and NR. Position 373-375 (373-375) interacts with FAD; it reads DGD. Residue Gln-405 coordinates DNA.

This sequence belongs to the DNA photolyase class-1 family. As to quaternary structure, monomer. The cofactor is FAD. It depends on (6R)-5,10-methylene-5,6,7,8-tetrahydrofolate as a cofactor.

The enzyme catalyses cyclobutadipyrimidine (in DNA) = 2 pyrimidine residues (in DNA).. Involved in repair of UV radiation-induced DNA damage. Catalyzes the light-dependent monomerization (300-600 nm) of cyclobutyl pyrimidine dimers (in cis-syn configuration), which are formed between adjacent bases on the same DNA strand upon exposure to ultraviolet radiation. The protein is Deoxyribodipyrimidine photo-lyase (phrB) of Escherichia coli (strain K12).